The sequence spans 142 residues: Large ribosomal subunit protein uL13 (142 aa).

It belongs to the universal ribosomal protein uL13 family. Part of the 50S ribosomal subunit.

In terms of biological role, this protein is one of the early assembly proteins of the 50S ribosomal subunit, although it is not seen to bind rRNA by itself. It is important during the early stages of 50S assembly. The polypeptide is Large ribosomal subunit protein uL13 (Pseudomonas fluorescens (strain ATCC BAA-477 / NRRL B-23932 / Pf-5)).